The primary structure comprises 371 residues: Phosphatase IMPL1, chloroplastic (371 aa).

Residues methionine 1–alanine 60 constitute a chloroplast transit peptide. At valine 61 the chain carries N-acetylvaline. Positions 148, 165, 167, and 168 each coordinate Mg(2+). Glutamate 148 contributes to the substrate binding site. Substrate contacts are provided by residues leucine 167–threonine 170, glycine 273–alanine 275, glutamate 292, and aspartate 299. Residue aspartate 299 participates in Mg(2+) binding.

Belongs to the inositol monophosphatase superfamily. Mg(2+) serves as cofactor. Ubiquitous. Expressed in pistil and seed endosperm.

The protein localises to the plastid. The protein resides in the chloroplast stroma. It carries out the reaction a myo-inositol phosphate + H2O = myo-inositol + phosphate. The protein operates within polyol metabolism; myo-inositol biosynthesis; myo-inositol from D-glucose 6-phosphate: step 2/2. Functionally, phosphatase acting preferentially on D-myoinositol 1-phosphate (D-Ins 1-P). The protein is Phosphatase IMPL1, chloroplastic (IMPL1) of Arabidopsis thaliana (Mouse-ear cress).